We begin with the raw amino-acid sequence, 426 residues long: Serine--tRNA ligase (426 aa).

233-235 (TSE) lines the L-serine pocket. Residue 264-266 (RSE) participates in ATP binding. Position 287 (Glu-287) interacts with L-serine. An ATP-binding site is contributed by 351 to 354 (EISS). Ser-387 provides a ligand contact to L-serine.

This sequence belongs to the class-II aminoacyl-tRNA synthetase family. Type-1 seryl-tRNA synthetase subfamily. In terms of assembly, homodimer. The tRNA molecule binds across the dimer.

The protein localises to the cytoplasm. The enzyme catalyses tRNA(Ser) + L-serine + ATP = L-seryl-tRNA(Ser) + AMP + diphosphate + H(+). It carries out the reaction tRNA(Sec) + L-serine + ATP = L-seryl-tRNA(Sec) + AMP + diphosphate + H(+). It functions in the pathway aminoacyl-tRNA biosynthesis; selenocysteinyl-tRNA(Sec) biosynthesis; L-seryl-tRNA(Sec) from L-serine and tRNA(Sec): step 1/1. In terms of biological role, catalyzes the attachment of serine to tRNA(Ser). Is also able to aminoacylate tRNA(Sec) with serine, to form the misacylated tRNA L-seryl-tRNA(Sec), which will be further converted into selenocysteinyl-tRNA(Sec). This is Serine--tRNA ligase from Colwellia psychrerythraea (strain 34H / ATCC BAA-681) (Vibrio psychroerythus).